Consider the following 111-residue polypeptide: Probable 4-amino-4-deoxy-L-arabinose-phosphoundecaprenol flippase subunit ArnE (111 aa).

3 helical membrane passes run 38–58 (LWLG…LLVL), 61–81 (LPVG…TLAA), and 91–111 (PRHW…GSAA). Residues 40 to 109 (LGLALICMGA…IISGIIILGS (70 aa)) form the EamA domain.

This sequence belongs to the ArnE family. Heterodimer of ArnE and ArnF.

It localises to the cell inner membrane. It participates in bacterial outer membrane biogenesis; lipopolysaccharide biosynthesis. Its function is as follows. Translocates 4-amino-4-deoxy-L-arabinose-phosphoundecaprenol (alpha-L-Ara4N-phosphoundecaprenol) from the cytoplasmic to the periplasmic side of the inner membrane. The protein is Probable 4-amino-4-deoxy-L-arabinose-phosphoundecaprenol flippase subunit ArnE of Salmonella choleraesuis (strain SC-B67).